The following is a 167-amino-acid chain: Neutrophilic granule protein (167 aa).

An N-terminal signal peptide occupies residues Met1–Ala21. Residues Glu122–Phe141 are disordered.

This sequence belongs to the cathelicidin family. In terms of assembly, monomer. Homodimer; disulfide-linked. In terms of tissue distribution, expressed in myeloid bone marrow cells. Expressed in neutrophilic precursors (at protein level). Expressed in myeloid bone marrow cells.

It localises to the secreted. The protein resides in the cytoplasmic granule. Its function is as follows. Acts as an inhibitor of cathepsin B (CTSB) activity. Plays a role as a negative regulator of tumor vascular development, cell invasion and metastasis. This Mus musculus (Mouse) protein is Neutrophilic granule protein.